Consider the following 441-residue polypeptide: Xylose isomerase (441 aa).

Residues H99 and D102 contribute to the active site. Mg(2+) contacts are provided by E230, E266, H269, D294, D305, D307, and D337.

It belongs to the xylose isomerase family. Homotetramer. Requires Mg(2+) as cofactor.

The protein resides in the cytoplasm. The enzyme catalyses alpha-D-xylose = alpha-D-xylulofuranose. In terms of biological role, exhibits xylose isomerase activity. In Bacillus sp. (strain LW2), this protein is Xylose isomerase (xylA).